The primary structure comprises 157 residues: NudC domain-containing protein 2 (157 aa).

Position 2 is an N-acetylserine (Ser2). A CS domain is found at 14–104; it reads CATPWGQWYQ…DAANCWTSLL (91 aa). The tract at residues 134 to 157 is disordered; that stretch reads FDFSGAEISGNYTKGGPDFSNLEK. The residue at position 142 (Ser142) is a Phosphoserine. Tyr145 carries the post-translational modification Phosphotyrosine.

In terms of assembly, interacts with LIS1.

The protein resides in the chromosome. It is found in the centromere. Its subcellular location is the kinetochore. It localises to the cytoplasm. The protein localises to the cytoskeleton. The protein resides in the microtubule organizing center. It is found in the centrosome. Its subcellular location is the spindle pole. Its function is as follows. May regulate the LIS1/dynein pathway by stabilizing LIS1 with Hsp90 chaperone. This chain is NudC domain-containing protein 2 (Nudcd2), found in Rattus norvegicus (Rat).